The chain runs to 410 residues: Multifunctional CCA protein (410 aa).

The ATP site is built by glycine 8 and arginine 11. CTP-binding residues include glycine 8 and arginine 11. The Mg(2+) site is built by aspartate 21 and aspartate 23. 3 residues coordinate ATP: arginine 91, arginine 137, and arginine 140. CTP contacts are provided by arginine 91, arginine 137, and arginine 140. The 102-residue stretch at threonine 228 to tyrosine 329 folds into the HD domain.

Belongs to the tRNA nucleotidyltransferase/poly(A) polymerase family. Bacterial CCA-adding enzyme type 1 subfamily. In terms of assembly, monomer. Can also form homodimers and oligomers. The cofactor is Mg(2+). Ni(2+) is required as a cofactor.

The catalysed reaction is a tRNA precursor + 2 CTP + ATP = a tRNA with a 3' CCA end + 3 diphosphate. It catalyses the reaction a tRNA with a 3' CCA end + 2 CTP + ATP = a tRNA with a 3' CCACCA end + 3 diphosphate. Its function is as follows. Catalyzes the addition and repair of the essential 3'-terminal CCA sequence in tRNAs without using a nucleic acid template. Adds these three nucleotides in the order of C, C, and A to the tRNA nucleotide-73, using CTP and ATP as substrates and producing inorganic pyrophosphate. tRNA 3'-terminal CCA addition is required both for tRNA processing and repair. Also involved in tRNA surveillance by mediating tandem CCA addition to generate a CCACCA at the 3' terminus of unstable tRNAs. While stable tRNAs receive only 3'-terminal CCA, unstable tRNAs are marked with CCACCA and rapidly degraded. This is Multifunctional CCA protein from Pseudomonas aeruginosa (strain LESB58).